Reading from the N-terminus, the 156-residue chain is ATP synthase subunit b (156 aa).

Residues 5–25 (VTLIGQTVAFIIFVWFCMKFV) form a helical membrane-spanning segment.

The protein belongs to the ATPase B chain family. As to quaternary structure, F-type ATPases have 2 components, F(1) - the catalytic core - and F(0) - the membrane proton channel. F(1) has five subunits: alpha(3), beta(3), gamma(1), delta(1), epsilon(1). F(0) has three main subunits: a(1), b(2) and c(10-14). The alpha and beta chains form an alternating ring which encloses part of the gamma chain. F(1) is attached to F(0) by a central stalk formed by the gamma and epsilon chains, while a peripheral stalk is formed by the delta and b chains.

It is found in the cell inner membrane. In terms of biological role, f(1)F(0) ATP synthase produces ATP from ADP in the presence of a proton or sodium gradient. F-type ATPases consist of two structural domains, F(1) containing the extramembraneous catalytic core and F(0) containing the membrane proton channel, linked together by a central stalk and a peripheral stalk. During catalysis, ATP synthesis in the catalytic domain of F(1) is coupled via a rotary mechanism of the central stalk subunits to proton translocation. Functionally, component of the F(0) channel, it forms part of the peripheral stalk, linking F(1) to F(0). The protein is ATP synthase subunit b of Shewanella loihica (strain ATCC BAA-1088 / PV-4).